A 261-amino-acid polypeptide reads, in one-letter code: tRNA pseudouridine synthase A (261 aa).

Asp-52 functions as the Nucleophile in the catalytic mechanism. Tyr-111 contributes to the substrate binding site.

The protein belongs to the tRNA pseudouridine synthase TruA family. In terms of assembly, homodimer.

The catalysed reaction is uridine(38/39/40) in tRNA = pseudouridine(38/39/40) in tRNA. Its function is as follows. Formation of pseudouridine at positions 38, 39 and 40 in the anticodon stem and loop of transfer RNAs. The polypeptide is tRNA pseudouridine synthase A (Jannaschia sp. (strain CCS1)).